The sequence spans 206 residues: dTTP/UTP pyrophosphatase (206 aa).

Asp79 (proton acceptor) is an active-site residue.

It belongs to the Maf family. YhdE subfamily. It depends on a divalent metal cation as a cofactor.

The protein localises to the cytoplasm. It catalyses the reaction dTTP + H2O = dTMP + diphosphate + H(+). It carries out the reaction UTP + H2O = UMP + diphosphate + H(+). Functionally, nucleoside triphosphate pyrophosphatase that hydrolyzes dTTP and UTP. May have a dual role in cell division arrest and in preventing the incorporation of modified nucleotides into cellular nucleic acids. The polypeptide is dTTP/UTP pyrophosphatase (Rhizobium johnstonii (strain DSM 114642 / LMG 32736 / 3841) (Rhizobium leguminosarum bv. viciae)).